Here is a 315-residue protein sequence, read N- to C-terminus: Putative serine/threonine-protein phosphatase PP2A-4 catalytic subunit (315 aa).

Residues Asp-63, His-65, Asp-91, and Asn-123 each contribute to the Mn(2+) site. His-124 serves as the catalytic Proton donor. Mn(2+) contacts are provided by His-173 and His-247.

The protein belongs to the PPP phosphatase family. PP-2A subfamily. Mn(2+) serves as cofactor.

It is found in the cytoplasm. It carries out the reaction O-phospho-L-seryl-[protein] + H2O = L-seryl-[protein] + phosphate. The enzyme catalyses O-phospho-L-threonyl-[protein] + H2O = L-threonyl-[protein] + phosphate. The sequence is that of Putative serine/threonine-protein phosphatase PP2A-4 catalytic subunit (PP2A4) from Oryza sativa subsp. indica (Rice).